A 105-amino-acid polypeptide reads, in one-letter code: Thioredoxin (105 aa).

Positions Val2–Val105 constitute a Thioredoxin domain. The residue at position 3 (Lys3) is an N6-acetyllysine. At Lys8 the chain carries N6-succinyllysine. Catalysis depends on nucleophile residues Cys32 and Cys35. Cys32 and Cys35 form a disulfide bridge. Lys39 is subject to N6-acetyllysine. 2 positions are modified to S-nitrosocysteine: Cys62 and Cys69. Residue Cys73 is modified to S-nitrosocysteine; alternate. Lys94 is modified (N6-acetyllysine; alternate). Lys94 carries the N6-succinyllysine; alternate modification.

The protein belongs to the thioredoxin family. As to quaternary structure, homodimer; disulfide-linked. Interacts with TXNIP through the redox-active site. Interacts with MAP3K5 and CASP3. Interacts with APEX1; the interaction stimulates the FOS/JUN AP-1 DNA-binding activity in a redox-dependent manner. Post-translationally, in the fully reduced protein, both Cys-69 and Cys-73 are nitrosylated in response to nitric oxide (NO). When two disulfide bonds are present in the protein, only Cys-73 is nitrosylated. Cys-73 can serve as donor for nitrosylation of target proteins.

It is found in the nucleus. The protein resides in the cytoplasm. It localises to the secreted. Participates in various redox reactions through the reversible oxidation of its active center dithiol to a disulfide and catalyzes dithiol-disulfide exchange reactions. Plays a role in the reversible S-nitrosylation of cysteine residues in target proteins, and thereby contributes to the response to intracellular nitric oxide. Nitrosylates the active site Cys of CASP3 in response to nitric oxide (NO), and thereby inhibits caspase-3 activity. Induces the FOS/JUN AP-1 DNA binding activity in ionizing radiation (IR) cells through its oxidation/reduction status and stimulates AP-1 transcriptional activity. The chain is Thioredoxin (TXN) from Callithrix jacchus (White-tufted-ear marmoset).